The chain runs to 215 residues: Redox-sensing transcriptional repressor Rex (215 aa).

Positions 18–57 (LYHRYLKYLDESGKERVSSAELSEAVKVDSATIRRDFSYF) form a DNA-binding region, H-T-H motif. 92-97 (GVGNLG) is an NAD(+) binding site.

The protein belongs to the transcriptional regulatory Rex family. In terms of assembly, homodimer.

The protein resides in the cytoplasm. Functionally, modulates transcription in response to changes in cellular NADH/NAD(+) redox state. This Listeria innocua serovar 6a (strain ATCC BAA-680 / CLIP 11262) protein is Redox-sensing transcriptional repressor Rex.